Reading from the N-terminus, the 119-residue chain is Fluoride-specific ion channel FluC 2 (119 aa).

4 consecutive transmembrane segments (helical) span residues 1–21 (MITVLTAGFGAIWGAILRYGI), 33–53 (FPYATLLINLTGAFLLGFIFS), 56–76 (FSPFIYALIGTGVLGGYTTFS), and 93–113 (VFTLYALLSYGGGLILVFLGY). The Na(+) site is built by Gly-70 and Thr-73.

It belongs to the fluoride channel Fluc/FEX (TC 1.A.43) family.

It is found in the cell membrane. It catalyses the reaction fluoride(in) = fluoride(out). Na(+) is not transported, but it plays an essential structural role and its presence is essential for fluoride channel function. Its function is as follows. Fluoride-specific ion channel. Important for reducing fluoride concentration in the cell, thus reducing its toxicity. This Lactobacillus johnsonii (strain CNCM I-12250 / La1 / NCC 533) protein is Fluoride-specific ion channel FluC 2.